A 380-amino-acid chain; its full sequence is Fibromodulin (380 aa).

Residues 1–18 (MRWANILLVAGLCRASLG) form the signal peptide. The LRRNT domain occupies 71 to 109 (EAQQASSWQCPQECDCPPNFSSAMYCDTRNLRYLPFVPT). N-linked (GlcNAc...) asparagine glycosylation occurs at asparagine 89. 8 LRR repeats span residues 110 to 131 (RMKY…AFDN), 134 to 147 (ELEW…QISS), 160 to 180 (NLER…PLPR), 181 to 202 (SLRE…ALEG), 205 to 227 (NLTA…KGLK), 228 to 248 (SLIL…GLPM), 249 to 270 (ALEQ…YFKV), and 273 to 293 (KLLY…STNT). Asparagine 131 carries N-linked (GlcNAc...) (keratan sulfate) asparagine glycosylation. Asparagine 170 carries an N-linked (GlcNAc...) (keratan sulfate) asparagine glycan. An N-linked (GlcNAc...) (keratan sulfate) asparagine glycan is attached at asparagine 205. The N-linked (GlcNAc...) (keratan sulfate) asparagine glycan is linked to asparagine 295. LRR repeat units follow at residues 298–317 (SILE…RVST) and 318–339 (NLEN…SFCT). The cysteines at positions 338 and 371 are disulfide-linked. N-linked (GlcNAc...) asparagine glycosylation is present at asparagine 345. One copy of the LRR 11 repeat lies at 348–371 (RLQVLRLDGNEIKRNAMPPDAPLC).

This sequence belongs to the small leucine-rich proteoglycan (SLRP) family. SLRP class II subfamily. In terms of assembly, binds to type I and type II collagen. In terms of processing, binds keratan sulfate chains.

It localises to the secreted. The protein resides in the extracellular space. Its subcellular location is the extracellular matrix. Its function is as follows. Affects the rate of fibrils formation. May have a primary role in collagen fibrillogenesis. The polypeptide is Fibromodulin (FMOD) (Gallus gallus (Chicken)).